Here is a 537-residue protein sequence, read N- to C-terminus: uncharacterized protein (537 aa).

4 disordered regions span residues 1–33, 71–98, 197–220, and 516–537; these read MEPG…ILAF, SSPP…RKRQ, SHNN…SEEK, and GRQR…EEQN. S72 is subject to Phosphoserine. A compositionally biased stretch (basic and acidic residues) spans 88-98; that stretch reads SRVDSEARKRQ. The segment covering 197 to 214 has biased composition (polar residues); the sequence is SHNNMASSNTQSNTQLSE. Residues 516 to 529 are compositionally biased toward basic residues; it reads GRQRSSRYKSHVHK.

It belongs to the NAD kinase family.

This is an uncharacterized protein from Schizosaccharomyces pombe (strain 972 / ATCC 24843) (Fission yeast).